The sequence spans 78 residues: Acyl carrier protein (78 aa).

Residues S2–K77 form the Carrier domain. O-(pantetheine 4'-phosphoryl)serine is present on S37.

The protein belongs to the acyl carrier protein (ACP) family. Post-translationally, 4'-phosphopantetheine is transferred from CoA to a specific serine of apo-ACP by AcpS. This modification is essential for activity because fatty acids are bound in thioester linkage to the sulfhydryl of the prosthetic group.

The protein localises to the cytoplasm. The protein operates within lipid metabolism; fatty acid biosynthesis. Carrier of the growing fatty acid chain in fatty acid biosynthesis. The sequence is that of Acyl carrier protein from Novosphingobium aromaticivorans (strain ATCC 700278 / DSM 12444 / CCUG 56034 / CIP 105152 / NBRC 16084 / F199).